A 471-amino-acid polypeptide reads, in one-letter code: ATP synthase subunit beta (471 aa).

154–161 (GGAGVGKT) is a binding site for ATP.

It belongs to the ATPase alpha/beta chains family. F-type ATPases have 2 components, CF(1) - the catalytic core - and CF(0) - the membrane proton channel. CF(1) has five subunits: alpha(3), beta(3), gamma(1), delta(1), epsilon(1). CF(0) has three main subunits: a(1), b(2) and c(9-12). The alpha and beta chains form an alternating ring which encloses part of the gamma chain. CF(1) is attached to CF(0) by a central stalk formed by the gamma and epsilon chains, while a peripheral stalk is formed by the delta and b chains.

The protein resides in the cell membrane. The catalysed reaction is ATP + H2O + 4 H(+)(in) = ADP + phosphate + 5 H(+)(out). Produces ATP from ADP in the presence of a proton gradient across the membrane. The catalytic sites are hosted primarily by the beta subunits. The protein is ATP synthase subunit beta of Mesomycoplasma hyopneumoniae (strain 7448) (Mycoplasma hyopneumoniae).